Reading from the N-terminus, the 267-residue chain is 2-oxo-hept-4-ene-1,7-dioate hydratase (267 aa).

Glu-106, Glu-108, and Glu-139 together coordinate Mg(2+).

It belongs to the hydratase/decarboxylase family. Homodecamer. Mg(2+) serves as cofactor.

It catalyses the reaction (4Z)-2-oxohept-4-enedioate + H2O = (4S)-4-hydroxy-2-oxoheptanedioate. It functions in the pathway aromatic compound metabolism; 4-hydroxyphenylacetate degradation; pyruvate and succinate semialdehyde from 4-hydroxyphenylacetate: step 6/7. Transforms 2-oxo-hept-4-ene-1,7-dioate (OHED) into 4-hydroxy-2-oxoheptanedioate, a step in the 4-hydroxyphenylacetic acid (4-HPA) degradation pathway. This is 2-oxo-hept-4-ene-1,7-dioate hydratase from Escherichia coli.